Reading from the N-terminus, the 714-residue chain is Forkhead box protein P2 (714 aa).

Polar residues predominate over residues 1–28 (MMQESATETISNSSMNQNGMSTLSSQLD). Disordered stretches follow at residues 1 to 45 (MMQE…SEVS) and 284 to 338 (KHGG…TGAS). Positions 291-304 (TTNNSSSTTSSTTS) are enriched in low complexity. A compositionally biased stretch (polar residues) spans 314–323 (SIVNGQSSVL). The span at 325–336 (ARRDSSSHEETG) shows a compositional bias: basic and acidic residues. The C2H2-type zinc finger occupies 345 to 370 (GVCKWPGCESICEDFGQFLKHLNNEH). The tract at residues 387 to 408 (VQQLEIQLSKERERLQAMMTHL) is leucine-zipper. The interval 421 to 425 (PLNLV) is CTBP1-binding. Residues 437–458 (TSPQSLPQTPTTPTAPVTPITQ) show a composition bias toward low complexity. A disordered region spans residues 437-464 (TSPQSLPQTPTTPTAPVTPITQGPSVIT). Residues 503–593 (RPPFTYATLI…SQKITGSPTL (91 aa)) constitute a DNA-binding region (fork-head). 2 disordered regions span residues 648–667 (LDHI…QPHI) and 677–714 (VIAE…EDLE). The span at 698 to 714 (LEDDREIEEEPLSEDLE) shows a compositional bias: acidic residues.

In terms of assembly, forms homodimers and heterodimers with FOXP1 and FOXP4. Dimerization is required for DNA-binding. Interacts with CTBP1. Interacts with FOXP1. Interacts with TBR1. Interacts with ZMYM2.

The protein localises to the nucleus. Functionally, transcriptional repressor that may play a role in the specification and differentiation of lung epithelium. May also play a role in developing neural, gastrointestinal and cardiovascular tissues. Can act with CTBP1 to synergistically repress transcription but CTPBP1 is not essential. Plays a role in synapse formation by regulating SRPX2 levels. The sequence is that of Forkhead box protein P2 (FOXP2) from Macaca mulatta (Rhesus macaque).